Consider the following 242-residue polypeptide: NH(3)-dependent NAD(+) synthetase (242 aa).

27 to 34 (GISGGIDS) is an ATP binding site. D33 contributes to the Mg(2+) binding site. Position 109 (R109) interacts with deamido-NAD(+). T129 is an ATP binding site. E134 is a Mg(2+) binding site. Deamido-NAD(+) is bound by residues K142 and D149. ATP contacts are provided by K158 and T180. 231–232 (HK) contributes to the deamido-NAD(+) binding site.

The protein belongs to the NAD synthetase family. In terms of assembly, homodimer.

The enzyme catalyses deamido-NAD(+) + NH4(+) + ATP = AMP + diphosphate + NAD(+) + H(+). It functions in the pathway cofactor biosynthesis; NAD(+) biosynthesis; NAD(+) from deamido-NAD(+) (ammonia route): step 1/1. Functionally, catalyzes the ATP-dependent amidation of deamido-NAD to form NAD. Uses ammonia as a nitrogen source. The chain is NH(3)-dependent NAD(+) synthetase from Thermoplasma volcanium (strain ATCC 51530 / DSM 4299 / JCM 9571 / NBRC 15438 / GSS1).